We begin with the raw amino-acid sequence, 62 residues long: Large ribosomal subunit protein bL28 (62 aa).

It belongs to the bacterial ribosomal protein bL28 family.

The sequence is that of Large ribosomal subunit protein bL28 from Desulforamulus reducens (strain ATCC BAA-1160 / DSM 100696 / MI-1) (Desulfotomaculum reducens).